The following is a 79-amino-acid chain: Large ribosomal subunit protein uL24 (79 aa).

This sequence belongs to the universal ribosomal protein uL24 family. Part of the 50S ribosomal subunit.

Its function is as follows. One of two assembly initiator proteins, it binds directly to the 5'-end of the 23S rRNA, where it nucleates assembly of the 50S subunit. In terms of biological role, one of the proteins that surrounds the polypeptide exit tunnel on the outside of the subunit. The polypeptide is Large ribosomal subunit protein uL24 (Aliarcobacter butzleri (strain RM4018) (Arcobacter butzleri)).